The following is a 538-amino-acid chain: Atos homolog protein B (538 aa).

Residues 1-18 are compositionally biased toward low complexity; it reads MRHVQAEPSPSSEPEAGP. Disordered stretches follow at residues 1–103, 153–185, 197–300, and 323–342; these read MRHV…GLLG, NTLHTRDWASPDPGGQGSLGESPGPAPPGQLHT, GGKS…VLDP, and SLRKGPGLLSPPSASPVPTP. Residues 227–238 are compositionally biased toward pro residues; sequence HTPPGPGPPGPC. 2 positions are modified to phosphoserine: Ser-254 and Ser-255. Over residues 323 to 334 the composition is skewed to low complexity; sequence SLRKGPGLLSPP. The segment at 348–430 is required for macropage invasion; it reads LLGSFEESLL…VPKVGTIQVT (83 aa). The transactivation domain 1 (TAD1) stretch occupies residues 436 to 444; that stretch reads QTVVKMFLV.

Belongs to the ATOS family.

It localises to the nucleus. In terms of biological role, transcription regulator that may syncronize transcriptional and translational programs. This is Atos homolog protein B from Pongo abelii (Sumatran orangutan).